Consider the following 431-residue polypeptide: Reverse prenyltransferase criA (431 aa).

Residues R104, K193, Y195, K262, Y264, Y347, Y412, and Y416 each contribute to the dimethylallyl diphosphate site.

Belongs to the tryptophan dimethylallyltransferase family. In terms of assembly, monomer.

The enzyme catalyses cyclo(L-tryptophyl-L-alanyl) + dimethylallyl diphosphate = preechinulin + diphosphate. The protein operates within secondary metabolite biosynthesis. Its pathway is alkaloid biosynthesis. Its function is as follows. Reverse prenyltransferase; part of the gene cluster that mediates the biosynthesis of echinulin family alkaloid. The pathway begins with the biosynthesis of the cyclic dipeptide cyclo-L-Trp-L-Ala (cyclo-TA) by the NRPS criC via condensation of L-alanine and L-tryptophan. The prenyltransferase criA then catalyzes the first prenylation step, a reverse prenylation reaction at C2, to yield preechinulin. Preechinulin is the substrate of the cytochrome P450 monooxygenase criE that catalyzes the formation of the double bond between C10 and C11 to produce neoechulin A. The unique prenyltransferase criF functions as a competitive enzyme with criE for preechinulin metabolization and uses preechinulin for effective regiospecific prenylations. Preechinulin is prenylated by criF at C5 or C7. C7-prenylation leads to accumulation of tardioxopiperazine B without further modification by criF. In contrast, the C5-prenylated tardioxopiperazine A can be prenylated again by criF, predominantly at C7 to form echinulin or less frequently at C4 to give variecolorin L. CriF also accepts neoechilunin A to produce varlecolorin G (prenylation at C5) or isoechinulin A (prenylation at C7). CriF further converts isoechinulin A into dehydroechinulin. Moreover, a yet unidentified enzyme can also convert neoechilunin A into neoechilunin B by introducing a double bond between positions C14 and C17 and thus provides a further substrate to criF for C5 and C7 prenylation. The polypeptide is Reverse prenyltransferase criA (Aspergillus cristatus (Chinese Fuzhuan brick tea-fermentation fungus)).